Reading from the N-terminus, the 143-residue chain is Putative nickel-responsive regulator (143 aa).

Ni(2+) is bound by residues His82, His97, His99, and Cys105.

The protein belongs to the transcriptional regulatory CopG/NikR family. It depends on Ni(2+) as a cofactor.

Transcriptional regulator. This Helicobacter hepaticus (strain ATCC 51449 / 3B1) protein is Putative nickel-responsive regulator.